Here is a 261-residue protein sequence, read N- to C-terminus: Cytochrome c oxidase subunit 3 (261 aa).

At 1 to 15 (MVHQSHAYHMLKPSP) the chain is on the mitochondrial matrix side. Residues 16–34 (WPLTGALSALLMTSGLAMW) traverse the membrane as a helical segment. The Mitochondrial intermembrane portion of the chain corresponds to 35 to 40 (FHFHST). The helical transmembrane segment at 41–66 (TLLLTGMLTNALTMYQWWRDVVREST) threads the bilayer. Topologically, residues 67–72 (YQGHHT) are mitochondrial matrix. The helical transmembrane segment at 73–105 (LPVQKGLRYGMILFITSEVFFFAGFFWAFYHSS) threads the bilayer. Residues 106–128 (LAPTPQLGGHWPPTGITPLNPLE) are Mitochondrial intermembrane-facing. A helical membrane pass occupies residues 129–152 (VPLLNTAVLLASGVSITWAHHSLM). The Mitochondrial matrix portion of the chain corresponds to 153 to 155 (ENN). A helical transmembrane segment spans residues 156 to 183 (RTQMIQALLITILLGIYFTLLQASEYIE). Over 184-190 (APFTISD) the chain is Mitochondrial intermembrane. The chain crosses the membrane as a helical span at residues 191 to 223 (GIYGSTFFMTTGFHGLHVIIGSTFLTVCLSCQL). Residues 224–232 (LFHFTSKHH) lie on the Mitochondrial matrix side of the membrane. The chain crosses the membrane as a helical span at residues 233–256 (FGFEAAAWYWHFVDVVWLFLYVSI). The Mitochondrial intermembrane portion of the chain corresponds to 257–261 (YWWGS).

Belongs to the cytochrome c oxidase subunit 3 family. Component of the cytochrome c oxidase (complex IV, CIV), a multisubunit enzyme composed of 14 subunits. The complex is composed of a catalytic core of 3 subunits MT-CO1, MT-CO2 and MT-CO3, encoded in the mitochondrial DNA, and 11 supernumerary subunits COX4I, COX5A, COX5B, COX6A, COX6B, COX6C, COX7A, COX7B, COX7C, COX8 and NDUFA4, which are encoded in the nuclear genome. The complex exists as a monomer or a dimer and forms supercomplexes (SCs) in the inner mitochondrial membrane with NADH-ubiquinone oxidoreductase (complex I, CI) and ubiquinol-cytochrome c oxidoreductase (cytochrome b-c1 complex, complex III, CIII), resulting in different assemblies (supercomplex SCI(1)III(2)IV(1) and megacomplex MCI(2)III(2)IV(2)).

The protein localises to the mitochondrion inner membrane. The catalysed reaction is 4 Fe(II)-[cytochrome c] + O2 + 8 H(+)(in) = 4 Fe(III)-[cytochrome c] + 2 H2O + 4 H(+)(out). Its function is as follows. Component of the cytochrome c oxidase, the last enzyme in the mitochondrial electron transport chain which drives oxidative phosphorylation. The respiratory chain contains 3 multisubunit complexes succinate dehydrogenase (complex II, CII), ubiquinol-cytochrome c oxidoreductase (cytochrome b-c1 complex, complex III, CIII) and cytochrome c oxidase (complex IV, CIV), that cooperate to transfer electrons derived from NADH and succinate to molecular oxygen, creating an electrochemical gradient over the inner membrane that drives transmembrane transport and the ATP synthase. Cytochrome c oxidase is the component of the respiratory chain that catalyzes the reduction of oxygen to water. Electrons originating from reduced cytochrome c in the intermembrane space (IMS) are transferred via the dinuclear copper A center (CU(A)) of subunit 2 and heme A of subunit 1 to the active site in subunit 1, a binuclear center (BNC) formed by heme A3 and copper B (CU(B)). The BNC reduces molecular oxygen to 2 water molecules using 4 electrons from cytochrome c in the IMS and 4 protons from the mitochondrial matrix. This is Cytochrome c oxidase subunit 3 (MT-CO3) from Pongo pygmaeus (Bornean orangutan).